The following is a 473-amino-acid chain: ATP synthase subunit beta, chloroplastic (473 aa).

172-179 (GGAGVGKT) serves as a coordination point for ATP.

This sequence belongs to the ATPase alpha/beta chains family. As to quaternary structure, F-type ATPases have 2 components, CF(1) - the catalytic core - and CF(0) - the membrane proton channel. CF(1) has five subunits: alpha(3), beta(3), gamma(1), delta(1), epsilon(1). CF(0) has four main subunits: a(1), b(1), b'(1) and c(9-12).

The protein resides in the plastid. It is found in the chloroplast thylakoid membrane. It carries out the reaction ATP + H2O + 4 H(+)(in) = ADP + phosphate + 5 H(+)(out). In terms of biological role, produces ATP from ADP in the presence of a proton gradient across the membrane. The catalytic sites are hosted primarily by the beta subunits. The polypeptide is ATP synthase subunit beta, chloroplastic (Pteridium esculentum (Bracken fern)).